Here is a 122-residue protein sequence, read N- to C-terminus: Large ribosomal subunit protein uL14 (122 aa).

The protein belongs to the universal ribosomal protein uL14 family. Part of the 50S ribosomal subunit. Forms a cluster with proteins L3 and L19. In the 70S ribosome, L14 and L19 interact and together make contacts with the 16S rRNA in bridges B5 and B8.

Its function is as follows. Binds to 23S rRNA. Forms part of two intersubunit bridges in the 70S ribosome. The chain is Large ribosomal subunit protein uL14 from Alcanivorax borkumensis (strain ATCC 700651 / DSM 11573 / NCIMB 13689 / SK2).